The primary structure comprises 95 residues: Defensin-like protein 232 (95 aa).

Positions 1 to 26 (MRCTTLIMVSFVVSCLLLSLVEESEA) are cleaved as a signal peptide. 4 cysteine pairs are disulfide-bonded: C33–C94, C43–C68, C51–C84, and C66–C86.

Belongs to the DEFL family. Flower buds.

Its subcellular location is the secreted. This is Defensin-like protein 232 (SCRL23) from Arabidopsis thaliana (Mouse-ear cress).